Consider the following 840-residue polypeptide: V-type proton ATPase 116 kDa subunit a 4 (840 aa).

Residues 1 to 390 (MVSVFRSEEM…DAYGVGSYRE (390 aa)) lie on the Cytoplasmic side of the membrane. The helical transmembrane segment at 391–409 (INPAPYTIITFPFLFAVMF) threads the bilayer. Residues 410–411 (GD) are Vacuolar-facing. A helical membrane pass occupies residues 412 to 428 (CGHGTVMLLAALWMILN). Topologically, residues 429-443 (ERRLLSQKTDNEIWN) are cytoplasmic. Residues 444–473 (TFFHGRYLILLMGIFSIYTGLIYNDCFSKS) traverse the membrane as a helical segment. Residues 474–538 (LNIFGSSWSV…ASNKLTFLNS (65 aa)) are Vacuolar-facing. A helical transmembrane segment spans residues 539–558 (YKMKMSVILGIVQMVFGVIL). Residues 559–576 (SLFNHIYFRRTLNIILQF) lie on the Cytoplasmic side of the membrane. Residues 577 to 597 (IPEMIFILCLFGYLVFMIIFK) traverse the membrane as a helical segment. Residues 598-642 (WCCFDVHVSQHAPSILIHFINMFLFNYSDSSNAPLYKHQQEVQSF) lie on the Vacuolar side of the membrane. A helical membrane pass occupies residues 643 to 662 (FVVMALISVPWMLLIKPFIL). Topologically, residues 663–727 (RASHRKSQLQ…DVFVHQAIHT (65 aa)) are cytoplasmic. A disordered region spans residues 675–704 (RIQEDATENIEGDSSSPSSRSGQRTSADTH). The helical transmembrane segment at 728–752 (IEYCLGCISNTASYLRLWALSLAHA) threads the bilayer. Residues 753–773 (QLSEVLWTMVMNSGLQTRGWG) lie on the Vacuolar side of the membrane. A helical membrane pass occupies residues 774–812 (GIVGVFIIFAVFAVLTVAILLIMEGLSAFLHALRLHWVE). Residues 813–840 (FQNKFYVGDGYKFSPFSFKHILDGTAEE) are Cytoplasmic-facing.

This sequence belongs to the V-ATPase 116 kDa subunit family. As to quaternary structure, V-ATPase is a heteromultimeric enzyme made up of two complexes: the ATP-hydrolytic V1 complex and the proton translocation V0 complex. The V1 complex consists of three catalytic AB heterodimers that form a heterohexamer, three peripheral stalks each consisting of EG heterodimers, one central rotor including subunits D and F, and the regulatory subunits C and H. The proton translocation complex V0 consists of the proton transport subunit a, a ring of proteolipid subunits c9c'', rotary subunit d, subunits e and f, and the accessory subunits ATP6AP1/Ac45 and ATP6AP2/PRR. Interacts with the V1 complex V-ATPase subunit A ATP6V1A. Interacts with the V0 complex V-ATPase subunit c ATP6V0C. Expressed in adult and fetal kidney. Found in the inner ear.

Its subcellular location is the apical cell membrane. The protein resides in the basolateral cell membrane. Subunit of the V0 complex of vacuolar(H+)-ATPase (V-ATPase), a multisubunit enzyme composed of a peripheral complex (V1) that hydrolyzes ATP and a membrane integral complex (V0) that translocates protons. V-ATPase is responsible for acidifying and maintaining the pH of intracellular compartments and in some cell types, is targeted to the plasma membrane, where it is responsible for acidifying the extracellular environment. Involved in normal vectorial acid transport into the urine by the kidney. The sequence is that of V-type proton ATPase 116 kDa subunit a 4 (ATP6V0A4) from Homo sapiens (Human).